The following is a 465-amino-acid chain: Argininosuccinate lyase (465 aa).

It belongs to the lyase 1 family. Argininosuccinate lyase subfamily.

The protein resides in the cytoplasm. The enzyme catalyses 2-(N(omega)-L-arginino)succinate = fumarate + L-arginine. The protein operates within amino-acid biosynthesis; L-arginine biosynthesis; L-arginine from L-ornithine and carbamoyl phosphate: step 3/3. This chain is Argininosuccinate lyase, found in Rhodopseudomonas palustris (strain BisB18).